The chain runs to 203 residues: Proteasome subunit beta 2 (203 aa).

A propeptide spans 1 to 10 (MNLQNKILKG) (removed in mature form; by autocatalysis). Residue Thr-11 is the Nucleophile of the active site.

The protein belongs to the peptidase T1B family. As to quaternary structure, the 20S proteasome core is composed of 14 alpha and 14 beta subunits that assemble into four stacked heptameric rings, resulting in a barrel-shaped structure. The two inner rings, each composed of seven catalytic beta subunits, are sandwiched by two outer rings, each composed of seven alpha subunits. The catalytic chamber with the active sites is on the inside of the barrel. Has a gated structure, the ends of the cylinder being occluded by the N-termini of the alpha-subunits. Is capped at one or both ends by the proteasome regulatory ATPase, PAN.

It is found in the cytoplasm. It catalyses the reaction Cleavage of peptide bonds with very broad specificity.. The formation of the proteasomal ATPase PAN-20S proteasome complex, via the docking of the C-termini of PAN into the intersubunit pockets in the alpha-rings, triggers opening of the gate for substrate entry. Interconversion between the open-gate and close-gate conformations leads to a dynamic regulation of the 20S proteasome proteolysis activity. Component of the proteasome core, a large protease complex with broad specificity involved in protein degradation. This Sulfolobus acidocaldarius (strain ATCC 33909 / DSM 639 / JCM 8929 / NBRC 15157 / NCIMB 11770) protein is Proteasome subunit beta 2.